A 172-amino-acid chain; its full sequence is Adenine phosphoribosyltransferase (172 aa).

This sequence belongs to the purine/pyrimidine phosphoribosyltransferase family. As to quaternary structure, homodimer.

Its subcellular location is the cytoplasm. The catalysed reaction is AMP + diphosphate = 5-phospho-alpha-D-ribose 1-diphosphate + adenine. Its pathway is purine metabolism; AMP biosynthesis via salvage pathway; AMP from adenine: step 1/1. Its function is as follows. Catalyzes a salvage reaction resulting in the formation of AMP, that is energically less costly than de novo synthesis. In Clostridium kluyveri (strain NBRC 12016), this protein is Adenine phosphoribosyltransferase.